A 201-amino-acid polypeptide reads, in one-letter code: Recombination protein RecR (201 aa).

Residues 59-74 (CKICGNIDTENICRIC) form a C4-type zinc finger. One can recognise a Toprim domain in the interval 82–177 (SIIAIVETVA…KISRLASGIP (96 aa)).

Belongs to the RecR family.

Functionally, may play a role in DNA repair. It seems to be involved in an RecBC-independent recombinational process of DNA repair. It may act with RecF and RecO. The sequence is that of Recombination protein RecR from Rickettsia massiliae (strain Mtu5).